Reading from the N-terminus, the 83-residue chain is UPF0248 protein TGAM_1209 (83 aa).

The protein belongs to the UPF0248 family.

The chain is UPF0248 protein TGAM_1209 from Thermococcus gammatolerans (strain DSM 15229 / JCM 11827 / EJ3).